Consider the following 395-residue polypeptide: Zinc finger protein 385D (395 aa).

The Matrin-type 1 zinc-finger motif lies at 80–110 (ISCNICQLRFNSDSQAAAHYKGTKHAKKLKA). Over residues 169–193 (MTTEITSKVEKSPTTATGNSSCPST) the composition is skewed to polar residues. The segment at 169–194 (MTTEITSKVEKSPTTATGNSSCPSTE) is disordered. 2 consecutive Matrin-type zinc fingers follow at residues 204 to 234 (LYCS…MLEA) and 267 to 297 (FHCE…RAAG). The disordered stretch occupies residues 282–309 (LKQHISSRRHKDRAAGKPPKPKYSPYNK).

Its subcellular location is the nucleus. The polypeptide is Zinc finger protein 385D (ZNF385D) (Homo sapiens (Human)).